A 415-amino-acid chain; its full sequence is PRKCA-binding protein (415 aa).

The PDZ domain occupies 22-105 (KVTLQKDAQN…EVTIHYNKLQ (84 aa)). Residues cysteine 44 and cysteine 46 each coordinate Zn(2+). Threonine 82 carries the phosphothreonine modification. Positions 144–357 (LCNDGLVKRL…CYAVLRDADV (214 aa)) constitute an AH domain. A disordered region spans residues 376–415 (EEFTDGEEEEEEEDTAAGEPSRDTRGAAGPLDKGGSWCDS). Positions 377-391 (EFTDGEEEEEEEDTA) are enriched in acidic residues. Cysteine 413 carries the S-palmitoyl cysteine; by DHHC8 lipid modification.

As to quaternary structure, monomer and homodimer. Interacts with CXADR. Interacts presynaptically with the glutamate receptors GRIA2, GRIA3, GRIK3, isoform 3 of GRIA4, isoform A of GRM4, GRM7 and GRM8; with NAPA and NAPB; and with BTG2. The interaction with NAPA and NAPB disrupts the interaction with GRIA2, conducting to the internalization of GRIA2. Interacts with PRKCA; with the amine transporters SLC6A2 and SLC6A3; with the channels ASIC1 and ASIC2; with the GTP-binding proteins ARF1 and ARF3; with the ephrin receptor tyrosine kinases EPHA7, EPHB1 and EPHB2; with ERBB2 and through its PDZ domain with the C-terminal tail of PRLHR. Interacts with UNC5A. Interacts (via AH domain) with NCS1/FREQ; in a calcium-dependent manner. Interacts with F-actin and associates with the ARP2/3 complex. Interacts (via PDZ domain) with ARF1 (activated); the interaction blocks Arp2/3 complex inhibition. Interacts with SORCS3. Phosphorylation at Thr-82 appears to inhibit the interaction with AMPA receptors. In terms of processing, palmitoylation on Cys-413 is essential for long-term synaptic depression (LTD). As to expression, ubiquitous.

Its subcellular location is the cytoplasm. It localises to the perinuclear region. It is found in the membrane. The protein localises to the postsynaptic density. The protein resides in the synapse. Its subcellular location is the synaptosome. It localises to the cytoskeleton. Probable adapter protein that bind to and organize the subcellular localization of a variety of membrane proteins containing some PDZ recognition sequence. Involved in the clustering of various receptors, possibly by acting at the receptor internalization level. Plays a role in synaptic plasticity by regulating the trafficking and internalization of AMPA receptors. May be regulated upon PRKCA activation. May regulate ASIC1/ASIC3 channel. Regulates actin polymerization by inhibiting the actin-nucleating activity of the Arp2/3 complex; the function is competitive with nucleation promoting factors and is linked to neuronal morphology regulation and AMPA receptor (AMPAR) endocytosis. Via interaction with the Arp2/3 complex involved in regulation of synaptic plasicity of excitatory synapses and required for spine shrinkage during long-term depression (LTD). Involved in regulation of astrocyte morphology, antagonistic to Arp2/3 complex activator WASL/N-WASP function. This is PRKCA-binding protein (PICK1) from Homo sapiens (Human).